The sequence spans 323 residues: Beta-ketoacyl-[acyl-carrier-protein] synthase III (323 aa).

Residues C113 and H250 contribute to the active site. Residues 251-255 are ACP-binding; it reads QANKR. N280 is an active-site residue.

It belongs to the thiolase-like superfamily. FabH family. In terms of assembly, homodimer.

It is found in the cytoplasm. It catalyses the reaction malonyl-[ACP] + acetyl-CoA + H(+) = 3-oxobutanoyl-[ACP] + CO2 + CoA. It functions in the pathway lipid metabolism; fatty acid biosynthesis. Functionally, catalyzes the condensation reaction of fatty acid synthesis by the addition to an acyl acceptor of two carbons from malonyl-ACP. Catalyzes the first condensation reaction which initiates fatty acid synthesis and may therefore play a role in governing the total rate of fatty acid production. Possesses both acetoacetyl-ACP synthase and acetyl transacylase activities. Its substrate specificity determines the biosynthesis of branched-chain and/or straight-chain of fatty acids. This is Beta-ketoacyl-[acyl-carrier-protein] synthase III from Mesorhizobium japonicum (strain LMG 29417 / CECT 9101 / MAFF 303099) (Mesorhizobium loti (strain MAFF 303099)).